An 84-amino-acid polypeptide reads, in one-letter code: ATP synthase subunit c (84 aa).

2 consecutive transmembrane segments (helical) span residues 9 to 29 (IIGA…GFAI) and 54 to 74 (IVAG…LLFI).

It belongs to the ATPase C chain family. As to quaternary structure, F-type ATPases have 2 components, F(1) - the catalytic core - and F(0) - the membrane proton channel. F(1) has five subunits: alpha(3), beta(3), gamma(1), delta(1), epsilon(1). F(0) has three main subunits: a(1), b(2) and c(10-14). The alpha and beta chains form an alternating ring which encloses part of the gamma chain. F(1) is attached to F(0) by a central stalk formed by the gamma and epsilon chains, while a peripheral stalk is formed by the delta and b chains.

It is found in the cell inner membrane. In terms of biological role, f(1)F(0) ATP synthase produces ATP from ADP in the presence of a proton or sodium gradient. F-type ATPases consist of two structural domains, F(1) containing the extramembraneous catalytic core and F(0) containing the membrane proton channel, linked together by a central stalk and a peripheral stalk. During catalysis, ATP synthesis in the catalytic domain of F(1) is coupled via a rotary mechanism of the central stalk subunits to proton translocation. Its function is as follows. Key component of the F(0) channel; it plays a direct role in translocation across the membrane. A homomeric c-ring of between 10-14 subunits forms the central stalk rotor element with the F(1) delta and epsilon subunits. In Haemophilus influenzae (strain PittEE), this protein is ATP synthase subunit c.